Consider the following 89-residue polypeptide: Small ribosomal subunit protein uS15 (89 aa).

Belongs to the universal ribosomal protein uS15 family. As to quaternary structure, part of the 30S ribosomal subunit. Forms a bridge to the 50S subunit in the 70S ribosome, contacting the 23S rRNA.

Functionally, one of the primary rRNA binding proteins, it binds directly to 16S rRNA where it helps nucleate assembly of the platform of the 30S subunit by binding and bridging several RNA helices of the 16S rRNA. Its function is as follows. Forms an intersubunit bridge (bridge B4) with the 23S rRNA of the 50S subunit in the ribosome. This chain is Small ribosomal subunit protein uS15, found in Pediococcus pentosaceus (strain ATCC 25745 / CCUG 21536 / LMG 10740 / 183-1w).